Here is a 418-residue protein sequence, read N- to C-terminus: DnaJ protein homolog 2 (418 aa).

A J domain is found at 11 to 76 (NTKYYEVLGV…REIYDQYGEE (66 aa)). The CR-type zinc-finger motif lies at 135–219 (GTSKKLSLSR…CKGEKVVQQK (85 aa)). CXXCXGXG motif repeat units lie at residues 148 to 155 (CTKCKGKG), 164 to 171 (CASCQGSG), 191 to 198 (CNECKGTG), and 207 to 214 (CPQCKGEK). The segment at 382 to 418 (VNIEEEMRRKQHQQAQEAYDEDDEGHGGAQRVQCAQQ) is disordered. A Cysteine methyl ester modification is found at C415. C415 carries the S-farnesyl cysteine lipid modification. Positions 416–418 (AQQ) are cleaved as a propeptide — removed in mature form.

The protein localises to the membrane. Functionally, plays a continuous role in plant development probably in the structural organization of compartments. The protein is DnaJ protein homolog 2 (LDJ2) of Allium porrum (Leek).